We begin with the raw amino-acid sequence, 261 residues long: MFVPIGSEQDFPSDYTLLLPAISVGNVGQLAIDLIISTLKIPKVGYFYTDCLVPMVGSNPYETDEENAKELCTNAEVYALPSQKLAVLQLRSLVIKKKSKSFRQALVSWIKRCAFARVILLSSCHAYHRDDTQLFGTPFRYLVTPALQKSVADVLKELEWKEMEKVSSYPGLNDNEKRVFIPGGGFTKRFYDDCCLEDLQMAVVLKFCSEGDNVPDAFSLLNQVNEWLHLVASTNGDVLAKWKAPGSWQLLFGSGLPAAIF.

This sequence belongs to the PSMG2 family. Forms a heterodimer with psmg1. Degraded by the proteasome upon completion of 20S proteasome maturation.

It localises to the nucleus. In terms of biological role, chaperone protein which promotes assembly of the 20S proteasome as part of a heterodimer with psmg1. This Xenopus tropicalis (Western clawed frog) protein is Proteasome assembly chaperone 2.